A 189-amino-acid chain; its full sequence is Probable chorismate pyruvate-lyase (189 aa).

Arg-77, Leu-115, and Glu-174 together coordinate substrate.

The protein belongs to the UbiC family.

It localises to the cytoplasm. The enzyme catalyses chorismate = 4-hydroxybenzoate + pyruvate. Its pathway is cofactor biosynthesis; ubiquinone biosynthesis. Its function is as follows. Removes the pyruvyl group from chorismate, with concomitant aromatization of the ring, to provide 4-hydroxybenzoate (4HB) for the ubiquinone pathway. This is Probable chorismate pyruvate-lyase from Shewanella sp. (strain MR-7).